The following is a 351-amino-acid chain: Caveolin-2 (351 aa).

Residues Met-1–Arg-14 show a composition bias toward polar residues. Disordered regions lie at residues Met-1–Ala-55, His-71–Leu-93, and Gln-144–Glu-193. Topologically, residues Met-1–Lys-261 are cytoplasmic. Acidic residues predominate over residues Thr-22–Asp-31. Basic residues predominate over residues His-38 to His-51. The segment covering Pro-167 to Ser-184 has biased composition (low complexity). The segment at residues Ile-262–Phe-290 is an intramembrane region (helical). Over Arg-291 to Val-351 the chain is Cytoplasmic.

This sequence belongs to the caveolin family. In terms of assembly, homooligomer. As to expression, expressed in intracellular bodies in intestinal cells.

It is found in the golgi apparatus membrane. The protein localises to the cell membrane. Its subcellular location is the membrane. It localises to the caveola. The protein resides in the apical cell membrane. May act as a scaffolding protein within caveolar membranes. Interacts directly with G-protein alpha subunits and can regulate their activity. Thought to have a role in the uptake of lipids and proteins in the intestinal cells; operates in the apical uptake of lipid markers and trafficking of yolk proteins. Affects fecundity and egg laying. The chain is Caveolin-2 (cav-2) from Caenorhabditis elegans.